Here is a 382-residue protein sequence, read N- to C-terminus: Sphingosine kinase 1 (382 aa).

A DAGKc domain is found at Pro-12–Ser-159. ATP is bound by residues Asn-22–Gln-24 and Thr-54–Asn-58. Position 79–82 (Ser-79–Gly-82) interacts with substrate. The Proton donor/acceptor role is filled by Asp-81. ATP contacts are provided by residues Glu-86 and Gly-111–Gly-113. 2 short sequence motifs (nuclear export signal) span residues Leu-147 to Leu-155 and Leu-161 to Leu-169. Residue Asp-178 participates in substrate binding. ATP contacts are provided by Arg-185 and Arg-191. Thr-193 is subject to Phosphothreonine. Ser-225 is subject to Phosphoserine. Asp-340–Glu-342 contributes to the ATP binding site.

In terms of assembly, interacts with ACY1. Binds to calmodulin. Interacts with SPHKAP. Interacts with CIB1, the interaction occurs in a calcium-dependent manner. Interacts with TRAF2. Interacts with EEF1A1; the interaction enhances SPHK1 kinase activity. Mg(2+) is required as a cofactor. In terms of tissue distribution, widely expressed. Expressed in brain (at protein level). Detected in neurons.

The protein resides in the cytoplasm. It localises to the endosome membrane. It is found in the nucleus. Its subcellular location is the cell membrane. The protein localises to the synapse. It carries out the reaction a sphingoid base + ATP = a sphingoid 1-phosphate + ADP + H(+). The catalysed reaction is L-seryl-[protein] + acetyl-CoA = O-acetyl-L-seryl-[protein] + CoA. It catalyses the reaction sphinganine + ATP = sphinganine 1-phosphate + ADP + H(+). The enzyme catalyses sphing-4-enine + ATP = sphing-4-enine 1-phosphate + ADP + H(+). It carries out the reaction 1-O-hexadecyl-2-amino-sn-glycerol + ATP = 1-O-hexadecyl-2-desoxy-2-amino-sn-glycero-3-phosphate + ADP + H(+). With respect to regulation, acetyltransferase activity increases in presence of the kinase substrate, sphingosine. In Purkinje cells, kinase activity on sphingosine increases in presence of VEGFA. In neurons, kinase activity increases during the first 24h in presence of Amyloid-beta protein 42 to decrease after 96h. Its function is as follows. Catalyzes the phosphorylation of sphingosine to form sphingosine 1-phosphate (SPP), a lipid mediator with both intra- and extracellular functions. Also acts on D-erythro-sphingosine and to a lesser extent sphinganine, but not other lipids, such as D,L-threo-dihydrosphingosine, N,N-dimethylsphingosine, diacylglycerol, ceramide, or phosphatidylinositol. In contrast to proapoptotic SPHK2, has a negative effect on intracellular ceramide levels, enhances cell growth and inhibits apoptosis. Involved in the regulation of inflammatory response and neuroinflammation. Via the product sphingosine 1-phosphate, stimulates TRAF2 E3 ubiquitin ligase activity, and promotes activation of NF-kappa-B in response to TNF signaling. In response to TNF and in parallel to NF-kappa-B activation, negatively regulates RANTES induction through p38 MAPK signaling pathway. Involved in endocytic membrane trafficking induced by sphingosine, recruited to dilate endosomes, also plays a role on later stages of endosomal maturation and membrane fusion independently of its kinase activity. In Purkinje cells, seems to be also involved in the regulation of autophagosome-lysosome fusion upon VEGFA. In terms of biological role, has serine acetyltransferase activity on PTGS2/COX2 in an acetyl-CoA dependent manner. The acetyltransferase activity increases in presence of the kinase substrate, sphingosine. During neuroinflammation, through PTGS2 acetylation, promotes neuronal secretion of specialized preresolving mediators (SPMs), especially 15-R-lipoxin A4, which results in an increase of phagocytic microglia. The protein is Sphingosine kinase 1 of Mus musculus (Mouse).